We begin with the raw amino-acid sequence, 116 residues long: Thioredoxin (116 aa).

Residues 2–113 (TDSEKSATIK…LLRELSDVVP (112 aa)) enclose the Thioredoxin domain. Cysteine 37 and cysteine 40 are joined by a disulfide.

It belongs to the thioredoxin family.

Functionally, participates in various redox reactions through the reversible oxidation of its active center dithiol to a disulfide and catalyzes dithiol-disulfide exchange reactions. The protein is Thioredoxin (trxA) of Mycobacterium bovis (strain ATCC BAA-935 / AF2122/97).